A 427-amino-acid chain; its full sequence is 3-phosphoshikimate 1-carboxyvinyltransferase (427 aa).

Lys20 is a phosphoenolpyruvate binding site. Residues Ser21 and Arg25 each contribute to the 3-phosphoshikimate site. Phosphoenolpyruvate is bound by residues Gly92 and Arg120. 5 residues coordinate 3-phosphoshikimate: Ser166, Ala167, Gln168, Asp312, and Lys339. Gln168 serves as a coordination point for phosphoenolpyruvate. Asp312 (proton acceptor) is an active-site residue. Residues Arg343 and Arg385 each coordinate phosphoenolpyruvate.

Homotetramer.

It localises to the cytoplasm. It carries out the reaction 3-phosphoshikimate + phosphoenolpyruvate = 5-O-(1-carboxyvinyl)-3-phosphoshikimate + phosphate. Its pathway is metabolic intermediate biosynthesis; chorismate biosynthesis; chorismate from D-erythrose 4-phosphate and phosphoenolpyruvate: step 6/7. With respect to regulation, competitively inhibited by glyphosate. Activated by ammonium, rubidium or potassium ions. Its function is as follows. Catalyzes the transfer of the enolpyruvyl moiety of phosphoenolpyruvate (PEP) to the 5-hydroxyl of shikimate-3-phosphate (S3P) to produce enolpyruvyl shikimate-3-phosphate and inorganic phosphate. The sequence is that of 3-phosphoshikimate 1-carboxyvinyltransferase from Streptococcus pneumoniae serotype 4 (strain ATCC BAA-334 / TIGR4).